Reading from the N-terminus, the 429-residue chain is Enolase (429 aa).

Position 163 (Gln163) interacts with (2R)-2-phosphoglycerate. Glu205 functions as the Proton donor in the catalytic mechanism. 3 residues coordinate Mg(2+): Asp242, Glu285, and Asp312. Lys337, Arg366, Ser367, and Lys388 together coordinate (2R)-2-phosphoglycerate. The active-site Proton acceptor is Lys337.

Belongs to the enolase family. Mg(2+) serves as cofactor.

The protein localises to the cytoplasm. The protein resides in the secreted. It localises to the cell surface. The catalysed reaction is (2R)-2-phosphoglycerate = phosphoenolpyruvate + H2O. The protein operates within carbohydrate degradation; glycolysis; pyruvate from D-glyceraldehyde 3-phosphate: step 4/5. In terms of biological role, catalyzes the reversible conversion of 2-phosphoglycerate (2-PG) into phosphoenolpyruvate (PEP). It is essential for the degradation of carbohydrates via glycolysis. The sequence is that of Enolase from Aromatoleum aromaticum (strain DSM 19018 / LMG 30748 / EbN1) (Azoarcus sp. (strain EbN1)).